We begin with the raw amino-acid sequence, 498 residues long: MEKYIMSLDQGTTSSRCIIFNKKGEIVSVAQKEFTQIYPKAGWVEHDPLEIWGKQAGVAGEALNIARISPEQIAGIGITNQRETTVVWNKRTGMPVYNAIVWQCRRTAGYCDELREKGIDKTIKEKTGLMLDAYFSATKIKWILDNVEGARELAEKGDLLFGNIDTWLIWNMTKGKIHVTDYTNASRTMLFNIHELKWDEELLEILDIPKSMLPEVKPSSCVYGETDEILFGVSIPIAGDAGDQQAALFGQTCFNAGMAKNTYGTGCFLLMNTGEKAVDSKNGLLTTIAVGIDGKVEYALEGSIFIGGAVIQWLRDELRMVKTAQETEKYATEVEDNNGVYLVPAFVGIGAPYWDSYARGTILGLTRGAKKEHIIRAALESMAYQTHDVLKAMEEDSGIELKALKVDGGACQNNFLMQFQSDILGVEVDRPEVVETTALGAAYLAGLAVGYWKDRNEISQNWAISRSFAPAMEDEKKEKLIKGWHKAVTKAMDWEERE.

Residue Thr12 participates in ADP binding. Thr12, Thr13, and Ser14 together coordinate ATP. Thr12 provides a ligand contact to sn-glycerol 3-phosphate. Arg16 is an ADP binding site. Residues Arg82, Glu83, Tyr134, and Asp243 each contribute to the sn-glycerol 3-phosphate site. The glycerol site is built by Arg82, Glu83, Tyr134, Asp243, and Gln244. ADP contacts are provided by Thr265 and Gly308. ATP contacts are provided by Thr265, Gly308, Gln312, and Gly409. Residues Gly409 and Asn413 each coordinate ADP.

This sequence belongs to the FGGY kinase family. Homotetramer and homodimer (in equilibrium).

It catalyses the reaction glycerol + ATP = sn-glycerol 3-phosphate + ADP + H(+). It functions in the pathway polyol metabolism; glycerol degradation via glycerol kinase pathway; sn-glycerol 3-phosphate from glycerol: step 1/1. With respect to regulation, activated by phosphorylation and inhibited by fructose 1,6-bisphosphate (FBP). Functionally, key enzyme in the regulation of glycerol uptake and metabolism. Catalyzes the phosphorylation of glycerol to yield sn-glycerol 3-phosphate. The polypeptide is Glycerol kinase (Clostridium botulinum (strain ATCC 19397 / Type A)).